The primary structure comprises 143 residues: Nucleoside diphosphate kinase (143 aa).

6 residues coordinate ATP: lysine 11, phenylalanine 59, arginine 87, threonine 93, arginine 104, and asparagine 114. Histidine 117 serves as the catalytic Pros-phosphohistidine intermediate.

Belongs to the NDK family. As to quaternary structure, homotetramer. Mg(2+) is required as a cofactor.

Its subcellular location is the cytoplasm. The catalysed reaction is a 2'-deoxyribonucleoside 5'-diphosphate + ATP = a 2'-deoxyribonucleoside 5'-triphosphate + ADP. It carries out the reaction a ribonucleoside 5'-diphosphate + ATP = a ribonucleoside 5'-triphosphate + ADP. Functionally, major role in the synthesis of nucleoside triphosphates other than ATP. The ATP gamma phosphate is transferred to the NDP beta phosphate via a ping-pong mechanism, using a phosphorylated active-site intermediate. The protein is Nucleoside diphosphate kinase of Stutzerimonas stutzeri (strain A1501) (Pseudomonas stutzeri).